The sequence spans 2639 residues: BAH and coiled-coil domain-containing protein 1 (2639 aa).

Disordered stretches follow at residues 23 to 49 (SAAA…GKYF), 84 to 107 (SAAS…GSHP), 188 to 249 (APAH…GKER), 669 to 702 (FLSS…RQPP), 716 to 746 (VSRS…PRST), 939 to 1047 (QRAA…QSTA), 1104 to 1331 (SDVH…HSSG), 1457 to 1513 (QREL…KKVK), 1582 to 1666 (KVKS…LGTE), 1722 to 1776 (EVKI…RDAL), 1868 to 1893 (FDDN…PLSA), and 2057 to 2119 (KKVS…DHFL). 2 stretches are compositionally biased toward low complexity: residues 24-41 (AAAA…QPPA) and 84-98 (SAAS…SSPP). 2 stretches are compositionally biased toward basic and acidic residues: residues 211–247 (GPKD…DGGK) and 679–698 (ERPD…DGEV). N6-acetyllysine is present on lysine 222. Positions 946–964 (RKPEDQHLDLEEPAQEKAP) are enriched in basic and acidic residues. Residues 972–988 (ALTPTAPGAPSPAAGPT) show a composition bias toward low complexity. Positions 989–1013 (KLPPCCHPPDPKPPASSPTPPPRPS) are enriched in pro residues. Positions 1106-1122 (VHSSNLEDPETMQTTAP) are enriched in polar residues. Residues 1182–1198 (LEGLQELQCAALLEAGG) show a composition bias toward low complexity. Over residues 1212 to 1221 (AREERSREEG) the composition is skewed to basic and acidic residues. Acidic residues predominate over residues 1244–1275 (LEDEGEQPAPEEDELEEDELGQQSMEDSEEDC). Residues 1307-1324 (DSPPDPQPPAASGPPSTV) show a composition bias toward pro residues. Residues 1439–1473 (EVGMRVRLAELQRRYKEKQRELARLQRKHDHERDE) are a coiled coil. Positions 1457-1475 (QRELARLQRKHDHERDESS) are enriched in basic and acidic residues. The span at 1478 to 1492 (PARRGPGRPRKRKHS) shows a compositional bias: basic residues. Over residues 1751-1761 (GKKKAKGKAKG) the composition is skewed to basic residues. Positions 1868-1888 (FDDNSSFSEEEEDEEEEEEDS) are enriched in acidic residues. The residue at position 2274 (serine 2274) is a Phosphoserine. 3 disordered regions span residues 2317 to 2336 (SDCH…LAAG), 2348 to 2383 (SSSS…SDDE), and 2432 to 2472 (GAGS…ENRP). Residues 2348-2371 (SSSSSGSSTSSSSGSVSTSSLCSS) are compositionally biased toward low complexity. Over residues 2372–2383 (DNEDSSYSSDDE) the composition is skewed to acidic residues. Low complexity predominate over residues 2432 to 2442 (GAGSGPSSSSK). The BAH domain occupies 2513–2633 (ETLRVGDCAV…PTTGRLVTAD (121 aa)).

The polypeptide is BAH and coiled-coil domain-containing protein 1 (Homo sapiens (Human)).